The sequence spans 309 residues: Ribosomal RNA small subunit methyltransferase H (309 aa).

Residues 33–35 (GGH), Asp53, Phe79, Asp100, and Gln107 each bind S-adenosyl-L-methionine.

The protein belongs to the methyltransferase superfamily. RsmH family.

The protein resides in the cytoplasm. The enzyme catalyses cytidine(1402) in 16S rRNA + S-adenosyl-L-methionine = N(4)-methylcytidine(1402) in 16S rRNA + S-adenosyl-L-homocysteine + H(+). Specifically methylates the N4 position of cytidine in position 1402 (C1402) of 16S rRNA. The polypeptide is Ribosomal RNA small subunit methyltransferase H (Clostridium botulinum (strain Loch Maree / Type A3)).